The chain runs to 56 residues: Ovomucoid (56 aa).

The 51-residue stretch at 6-56 (VDCSEYPKPACTLEYVPICGSDNKTYGNKCNFCNAVVESNGTLTLSHFGKC) folds into the Kazal-like domain. 3 cysteine pairs are disulfide-bonded: C8-C38, C16-C35, and C24-C56. A glycan (N-linked (GlcNAc...) asparagine) is linked at N45.

Its subcellular location is the secreted. The protein is Ovomucoid of Cyrtonyx montezumae (Montezuma quail).